A 231-amino-acid polypeptide reads, in one-letter code: Large ribosomal subunit protein uL1 (231 aa).

It belongs to the universal ribosomal protein uL1 family. Part of the 50S ribosomal subunit.

Its function is as follows. Binds directly to 23S rRNA. The L1 stalk is quite mobile in the ribosome, and is involved in E site tRNA release. Functionally, protein L1 is also a translational repressor protein, it controls the translation of the L11 operon by binding to its mRNA. The chain is Large ribosomal subunit protein uL1 from Mycoplasmopsis agalactiae (strain NCTC 10123 / CIP 59.7 / PG2) (Mycoplasma agalactiae).